Reading from the N-terminus, the 325-residue chain is Pyruvate dehydrogenase E1 component subunit beta (325 aa).

Residue Glu60 coordinates thiamine diphosphate.

Heterodimer of an alpha and a beta chain. It depends on thiamine diphosphate as a cofactor.

The enzyme catalyses N(6)-[(R)-lipoyl]-L-lysyl-[protein] + pyruvate + H(+) = N(6)-[(R)-S(8)-acetyldihydrolipoyl]-L-lysyl-[protein] + CO2. The pyruvate dehydrogenase complex catalyzes the overall conversion of pyruvate to acetyl-CoA and CO(2). It contains multiple copies of three enzymatic components: pyruvate dehydrogenase (E1), dihydrolipoamide acetyltransferase (E2) and lipoamide dehydrogenase (E3). The polypeptide is Pyruvate dehydrogenase E1 component subunit beta (pdhB) (Geobacillus stearothermophilus (Bacillus stearothermophilus)).